The following is a 440-amino-acid chain: MSYFEHIPAIRYEGPQSDNPLAYHHYDAEKRVLGKTLAEHLRIAVCYWHTFVWPGHDIFGQGAFQRPWQQPGDALERARLKADAAFEFFTKLGTPFYTFHDTDVAPEGDSLREYAANFARMVDYLGERQQASGVRLLWGTANLFSHPRFAAGAATNPNPDVFAWAAAQVCHALDATHRLGGENYVLWGGREGYETLLNTDLKRERDQFARFLSMVVEHKHRIGFKGALLIEPKPQEPTKHQYDYDVATVHGFLVQYGLQNEIRVNIEANHATLAGHSFHHEIANAFALGVFGSVDANRGDPQNGWDTDQFPNSVEELTLAFYEILRHGGFTTGGMNFDAKVRRQSVDPEDLFYGHVGAIDVLALALERAAVLVENDRLDALRRQRYAQWDDAFGQKILSGGYTLQSLAEDALARGVDPRHASGAQERLENIVNQAIYGLR.

Active-site residues include histidine 100 and aspartate 103. Positions 231, 267, 270, 295, 306, 308, and 338 each coordinate Mg(2+).

It belongs to the xylose isomerase family. Homotetramer. Requires Mg(2+) as cofactor.

Its subcellular location is the cytoplasm. The catalysed reaction is alpha-D-xylose = alpha-D-xylulofuranose. The chain is Xylose isomerase from Burkholderia ambifaria (strain MC40-6).